The sequence spans 179 residues: NADH dehydrogenase [ubiquinone] 1 beta subcomplex subunit 9 (179 aa).

Alanine 2 is subject to N-acetylalanine. Residue serine 85 is modified to Phosphoserine. The tract at residues 136-162 is disordered; that stretch reads EVKQLQEETPPGGPLTEALPPARKEGD.

This sequence belongs to the complex I LYR family. In terms of assembly, mammalian complex I is composed of 45 different subunits.

It is found in the mitochondrion inner membrane. Its function is as follows. Accessory subunit of the mitochondrial membrane respiratory chain NADH dehydrogenase (Complex I), that is believed to be not involved in catalysis. Complex I functions in the transfer of electrons from NADH to the respiratory chain. The immediate electron acceptor for the enzyme is believed to be ubiquinone. This is NADH dehydrogenase [ubiquinone] 1 beta subcomplex subunit 9 (NDUFB9) from Pan troglodytes (Chimpanzee).